A 340-amino-acid polypeptide reads, in one-letter code: Inactive hyaluronidase B (340 aa).

2 disulfides stabilise this stretch: Cys-21-Cys-310 and Cys-187-Cys-199. Asn-66 and Asn-81 each carry an N-linked (GlcNAc...) asparagine glycan.

This sequence belongs to the glycosyl hydrolase 56 family. In terms of processing, N-glycosylated on at least two Asn residues by identical heptasaccharide units composed of Man, GlcNAc, and Fuc residues in the molar ration of 3:2:2. Expressed by the venom gland.

It localises to the secreted. Functionally, has no hyaluronidase activity. This chain is Inactive hyaluronidase B, found in Vespula vulgaris (Yellow jacket).